The following is a 22-amino-acid chain: Peroxidase 5 (22 aa).

This sequence belongs to the peroxidase family. Classical plant (class III) peroxidase subfamily. Requires heme b as cofactor. Ca(2+) serves as cofactor.

It localises to the secreted. Its subcellular location is the cell wall. The catalysed reaction is 2 a phenolic donor + H2O2 = 2 a phenolic radical donor + 2 H2O. Its function is as follows. Removal of H(2)O(2), oxidation of toxic reductants, biosynthesis and degradation of lignin, suberization, auxin catabolism, response to environmental stresses such as wounding, pathogen attack and oxidative stress. These functions might be dependent on each isozyme/isoform in each plant tissue. In Cycas revoluta (Sago palm), this protein is Peroxidase 5.